A 475-amino-acid polypeptide reads, in one-letter code: Dihydrolipoyl dehydrogenase (475 aa).

FAD is bound by residues 36 to 45, Lys-54, and Gly-117; that span reads ERYNTLGGVC. Residues Cys-45 and Cys-50 are joined by a disulfide bond. NAD(+) is bound by residues 182–186, Glu-205, Val-238, and 270–273; these read GGGII and AIGR. FAD-binding residues include Asp-313 and Ala-321. His-445 functions as the Proton acceptor in the catalytic mechanism.

The protein belongs to the class-I pyridine nucleotide-disulfide oxidoreductase family. Requires FAD as cofactor.

It is found in the cytoplasm. The catalysed reaction is N(6)-[(R)-dihydrolipoyl]-L-lysyl-[protein] + NAD(+) = N(6)-[(R)-lipoyl]-L-lysyl-[protein] + NADH + H(+). Its function is as follows. The branched-chain alpha-keto dehydrogenase complex catalyzes the overall conversion of alpha-keto acids to acyl-CoA and CO(2). It contains multiple copies of 3 enzymatic components: branched-chain alpha-keto acid decarboxylase (E1), lipoamide acyltransferase (E2) and lipoamide dehydrogenase (E3). This chain is Dihydrolipoyl dehydrogenase (lpd), found in Vibrio cholerae serotype O1 (strain ATCC 39315 / El Tor Inaba N16961).